A 311-amino-acid polypeptide reads, in one-letter code: Olfactory receptor 10G7 (311 aa).

At methionine 1–alanine 23 the chain is on the extracellular side. Asparagine 3 carries an N-linked (GlcNAc...) asparagine glycan. The helical transmembrane segment at proline 24–leucine 44 threads the bilayer. Residues leucine 45–histidine 52 lie on the Cytoplasmic side of the membrane. A helical membrane pass occupies residues leucine 53–threonine 73. Residues valine 74 to alanine 98 lie on the Extracellular side of the membrane. A disulfide bridge connects residues cysteine 96 and cysteine 188. The helical transmembrane segment at glutamine 99 to tyrosine 119 threads the bilayer. Residues aspartate 120–arginine 138 lie on the Cytoplasmic side of the membrane. Residues serine 139 to threonine 159 traverse the membrane as a helical segment. Residues isoleucine 160–methionine 196 lie on the Extracellular side of the membrane. Residues valine 197–serine 216 form a helical membrane-spanning segment. The Cytoplasmic portion of the chain corresponds to tyrosine 217–alanine 236. Residues phenylalanine 237–isoleucine 257 form a helical membrane-spanning segment. Over tyrosine 258–histidine 268 the chain is Extracellular. A helical transmembrane segment spans residues glycine 269–leucine 289. The Cytoplasmic portion of the chain corresponds to arginine 290–glutamate 311.

Belongs to the G-protein coupled receptor 1 family.

Its subcellular location is the cell membrane. Functionally, odorant receptor. The sequence is that of Olfactory receptor 10G7 (OR10G7) from Homo sapiens (Human).